Reading from the N-terminus, the 659-residue chain is MSENIDVQATVTVTFPDGRNMSIPSGSSGYDIAQSIGHSLAREALAIRINGELADLGTAVTDDATVEIITFDHPGATGKHIFWHSASHIMAQAIEELFPGTKFGAGPAVEQGFYYDIASEHRFNEEDLQKIEQQMLDISKRSIDIRREEMPREKAIAFFSESRKDPYKVEILQDTLKEADSVSIYHQGAFADLCSGPHLPNTSKLKAVKLTNISASFWRGDSSRESMQRIYGIAFPSAKLLKQHLARLEEAKKRDHRKLGAELELFMLSQDVGSGLPIWLPKGAIIRSELEAFLKEEQRKRGYVPVYTPHIGNIDLYKRSGHYPYYSDSQFPPLTYKDDLGREEQYLLKPMNCPHHHLIYSSQLRSYRDLPIRMAEFGTVYRHEQSGELNGLIRARGFTQDDSHIYCRPDQLVDEICAAIDLTKFVFTTLGFDDIEVRLSLHDPENQGKYGGTEEVWKQAEKDVREAADRMEINYVIGIGEASFYGPKIDFIVRDALGRKWQLGTVQVDYVMPERFDLSYIGSDGKPHRPVIIHRAPFGSMERFIGVLIEHTAGNFPLWLAPVQVAVLPITEEVHAYAERVHQMLIDNGIRADLDIRSEKIGKKIREAEVGKIPYMVIIGQKEADSEEISLRRHRKGDQGSLTLQALKDMLVKEVRNKS.

Positions 7–70 (VQATVTVTFP…TDDATVEIIT (64 aa)) constitute a TGS domain. The interval 255–557 (DHRKLGAELE…LIEHTAGNFP (303 aa)) is catalytic. Positions 353, 404, and 534 each coordinate Zn(2+).

The protein belongs to the class-II aminoacyl-tRNA synthetase family. As to quaternary structure, homodimer. Zn(2+) serves as cofactor.

The protein localises to the cytoplasm. The enzyme catalyses tRNA(Thr) + L-threonine + ATP = L-threonyl-tRNA(Thr) + AMP + diphosphate + H(+). Its function is as follows. Catalyzes the attachment of threonine to tRNA(Thr) in a two-step reaction: L-threonine is first activated by ATP to form Thr-AMP and then transferred to the acceptor end of tRNA(Thr). Also edits incorrectly charged L-seryl-tRNA(Thr). The sequence is that of Threonine--tRNA ligase from Chlorobium phaeobacteroides (strain BS1).